The chain runs to 107 residues: Nucleoid-associated protein RT0857 (107 aa).

It belongs to the YbaB/EbfC family. As to quaternary structure, homodimer.

Its subcellular location is the cytoplasm. The protein localises to the nucleoid. Binds to DNA and alters its conformation. May be involved in regulation of gene expression, nucleoid organization and DNA protection. The chain is Nucleoid-associated protein RT0857 from Rickettsia typhi (strain ATCC VR-144 / Wilmington).